Here is a 79-residue protein sequence, read N- to C-terminus: Small ribosomal subunit protein eS17 (79 aa).

The protein belongs to the eukaryotic ribosomal protein eS17 family.

The chain is Small ribosomal subunit protein eS17 from Saccharolobus solfataricus (strain ATCC 35092 / DSM 1617 / JCM 11322 / P2) (Sulfolobus solfataricus).